We begin with the raw amino-acid sequence, 578 residues long: Peptidyl-prolyl cis-trans isomerase-like 2 (578 aa).

In terms of domain architecture, U-box spans 40–114; it reads RRLPFNFCAA…SDSLGAGLSD (75 aa). The tract at residues 240–260 is disordered; sequence KAREQGGDVNRSSTALTKPTG. Residues 321 to 475 enclose the PPIase cyclophilin-type domain; sequence ATGFARMETN…NKILIKDIVI (155 aa). A disordered region spans residues 505 to 578; that stretch reads GTDDDKTTWT…GGGFGNFDNW (74 aa). Positions 538–548 are enriched in polar residues; sequence KTTTQQSTPTV. Residues 551 to 560 are compositionally biased toward acidic residues; sequence ADLEDVDTWE. Gly residues predominate over residues 569-578; the sequence is GGGFGNFDNW.

This sequence belongs to the cyclophilin-type PPIase family. PPIL2 subfamily.

The protein resides in the nucleus. It catalyses the reaction [protein]-peptidylproline (omega=180) = [protein]-peptidylproline (omega=0). The enzyme catalyses S-ubiquitinyl-[E2 ubiquitin-conjugating enzyme]-L-cysteine + [acceptor protein]-L-lysine = [E2 ubiquitin-conjugating enzyme]-L-cysteine + N(6)-ubiquitinyl-[acceptor protein]-L-lysine.. It functions in the pathway protein modification; protein ubiquitination. In terms of biological role, may catalyze the cis-trans isomerization of proline imidic peptide bonds in oligopeptides thereby assisting the folding of proteins. May also function as a chaperone, playing a role in intracellular transport of proteins. May also have a protein ubiquitin ligase activity acting as an E3 ubiquitin protein ligase or as a ubiquitin-ubiquitin ligase promoting elongation of ubiquitin chains on proteins. The chain is Peptidyl-prolyl cis-trans isomerase-like 2 (CYP8) from Gibberella zeae (strain ATCC MYA-4620 / CBS 123657 / FGSC 9075 / NRRL 31084 / PH-1) (Wheat head blight fungus).